Reading from the N-terminus, the 363-residue chain is S-adenosylmethionine:tRNA ribosyltransferase-isomerase (363 aa).

It belongs to the QueA family. In terms of assembly, monomer.

It is found in the cytoplasm. It catalyses the reaction 7-aminomethyl-7-carbaguanosine(34) in tRNA + S-adenosyl-L-methionine = epoxyqueuosine(34) in tRNA + adenine + L-methionine + 2 H(+). It functions in the pathway tRNA modification; tRNA-queuosine biosynthesis. Its function is as follows. Transfers and isomerizes the ribose moiety from AdoMet to the 7-aminomethyl group of 7-deazaguanine (preQ1-tRNA) to give epoxyqueuosine (oQ-tRNA). The sequence is that of S-adenosylmethionine:tRNA ribosyltransferase-isomerase from Magnetococcus marinus (strain ATCC BAA-1437 / JCM 17883 / MC-1).